A 750-amino-acid polypeptide reads, in one-letter code: Photosystem I P700 chlorophyll a apoprotein A1 (750 aa).

Transmembrane regions (helical) follow at residues 70-93 (VFSA…FHGA), 156-179 (LYCT…FHYH), 195-219 (LNHH…HVSL), 291-309 (IAHH…GHMY), 346-369 (WHAQ…HHMY), 385-411 (LSLF…IFMV), 433-455 (AIIS…LYIH), and 531-549 (FLVH…LILL). Residues C573 and C582 each coordinate [4Fe-4S] cluster. Helical transmembrane passes span 589–610 (HVFL…HFSW) and 664–686 (LSAY…MFLF). H675 provides a ligand contact to chlorophyll a'. Chlorophyll a contacts are provided by M683 and Y691. Residue W692 coordinates phylloquinone. Residues 724-744 (AVGVTHYLLGGIATTWAFFLA) traverse the membrane as a helical segment.

This sequence belongs to the PsaA/PsaB family. As to quaternary structure, the PsaA/B heterodimer binds the P700 chlorophyll special pair and subsequent electron acceptors. PSI consists of a core antenna complex that captures photons, and an electron transfer chain that converts photonic excitation into a charge separation. The eukaryotic PSI reaction center is composed of at least 11 subunits. Requires P700 is a chlorophyll a/chlorophyll a' dimer, A0 is one or more chlorophyll a, A1 is one or both phylloquinones and FX is a shared 4Fe-4S iron-sulfur center. as cofactor.

Its subcellular location is the plastid. It localises to the chloroplast thylakoid membrane. It carries out the reaction reduced [plastocyanin] + hnu + oxidized [2Fe-2S]-[ferredoxin] = oxidized [plastocyanin] + reduced [2Fe-2S]-[ferredoxin]. Its function is as follows. PsaA and PsaB bind P700, the primary electron donor of photosystem I (PSI), as well as the electron acceptors A0, A1 and FX. PSI is a plastocyanin-ferredoxin oxidoreductase, converting photonic excitation into a charge separation, which transfers an electron from the donor P700 chlorophyll pair to the spectroscopically characterized acceptors A0, A1, FX, FA and FB in turn. Oxidized P700 is reduced on the lumenal side of the thylakoid membrane by plastocyanin. This chain is Photosystem I P700 chlorophyll a apoprotein A1, found in Citrus sinensis (Sweet orange).